An 88-amino-acid chain; its full sequence is Small ribosomal subunit protein uS15c (88 aa).

The protein belongs to the universal ribosomal protein uS15 family. As to quaternary structure, part of the 30S ribosomal subunit.

The protein resides in the plastid. Its subcellular location is the chloroplast. This is Small ribosomal subunit protein uS15c (rps15) from Angiopteris evecta (Mule's foot fern).